The chain runs to 512 residues: GMP synthase [glutamine-hydrolyzing] (512 aa).

In terms of domain architecture, Glutamine amidotransferase type-1 spans 3–196 (NILILDFGSQ…VKHICQTSET (194 aa)). Residue Cys80 is the Nucleophile of the active site. Residues His169 and Glu171 contribute to the active site. One can recognise a GMPS ATP-PPase domain in the interval 197–387 (WKIETIEKQL…LGLPDVLISR (191 aa)). 225 to 231 (SGGVDSS) is an ATP binding site.

As to quaternary structure, homodimer.

It carries out the reaction XMP + L-glutamine + ATP + H2O = GMP + L-glutamate + AMP + diphosphate + 2 H(+). The protein operates within purine metabolism; GMP biosynthesis; GMP from XMP (L-Gln route): step 1/1. Its function is as follows. Catalyzes the synthesis of GMP from XMP. This is GMP synthase [glutamine-hydrolyzing] (guaA) from Chlamydia muridarum (strain MoPn / Nigg).